Reading from the N-terminus, the 78-residue chain is Large ribosomal subunit protein bL28 (78 aa).

The interval 1–23 (MSRVCQVTGKKPMVGNNRSHAKN) is disordered.

The protein belongs to the bacterial ribosomal protein bL28 family.

The polypeptide is Large ribosomal subunit protein bL28 (Shewanella sediminis (strain HAW-EB3)).